A 473-amino-acid polypeptide reads, in one-letter code: H(+)/Cl(-) exchange transporter ClcA (473 aa).

The Cytoplasmic portion of the chain corresponds to 1–32 (MKTDTPSLEIPQAARLRRRQLIRQLLERDKTP). The chain crosses the membrane as a helical span at residues 33–69 (LAILFMAAVVGTLVGLAAVAFDKGVSWLQNQRMGALV). The Periplasmic portion of the chain corresponds to 70-76 (HTADNYP). Residues 77-100 (LLLTVAFLCSAVLAMFGYFLVRKY) traverse the membrane as a helical segment. The short motif at 106–110 (GSGIP) is the Selectivity filter part_1 element. Chloride is bound at residue serine 107. Positions 109-116 (IPEIEGAL) form an intramembrane region, helical. Residues 117-123 (EDQRPVR) lie on the Cytoplasmic side of the membrane. Helical transmembrane passes span 124-141 (WWRV…TLGG) and 148-166 (EGPT…LDIF). A Selectivity filter part_2 motif is present at residues 146-150 (GREGP). Topologically, residues 167 to 176 (RLKGDEARHT) are cytoplasmic. 2 intramembrane regions (helical) span residues 177–189 (LLAT…LAAA) and 193–201 (PLAGILFII). The Cytoplasmic segment spans residues 202–214 (EEMRPQFRYTLIS). A helical membrane pass occupies residues 215 to 232 (IKAVFIGVIMSTIMYRIF). Residues 233–252 (NHEVALIDVGKLSDAPLNTL) are Periplasmic-facing. Residues 253–281 (WLYLILGIIFGIFGPIFNKWVLGMQDLLH) traverse the membrane as a helical segment. Residues 282 to 287 (RVHGGN) lie on the Cytoplasmic side of the membrane. The helical transmembrane segment at 288–309 (ITKWVIMGGAIGGLCGLLGFVA) threads the bilayer. Residues 310–329 (PATSGGGFNLIPIATAGNFS) lie on the Periplasmic side of the membrane. A run of 2 helical transmembrane segments spans residues 330 to 349 (MGML…LCFS) and 355 to 376 (GIFA…MVAV). The short motif at 355–359 (GIFAP) is the Selectivity filter part_3 element. The chloride site is built by isoleucine 356 and phenylalanine 357. Residues 377 to 386 (ELFPQYHLEA) lie on the Periplasmic side of the membrane. Residues 387 to 401 (GTFAIAGMGALLAAS) constitute an intramembrane region (helical). The note=Loop between two helices intramembrane region spans 402-404 (IRA). An intramembrane region (helical) is located at residues 405–416 (PLTGIILVLEMT). The segment at residues 417-421 (DNYQL) is an intramembrane region (note=Loop between two helices). Residues 422 to 438 (ILPMIITGLGATLLAQF) traverse the membrane as a helical segment. The Cytoplasmic segment spans residues 439-473 (TGGKPLYSAILARTLAKQEAEQLARSKAASASENT). Tyrosine 445 is a binding site for chloride.

This sequence belongs to the chloride channel (TC 2.A.49) family. ClcA subfamily. In terms of assembly, homodimer.

The protein localises to the cell inner membrane. The enzyme catalyses 2 chloride(in) + H(+)(out) = 2 chloride(out) + H(+)(in). Its function is as follows. Proton-coupled chloride transporter. Functions as antiport system and exchanges two chloride ions for 1 proton. Probably acts as an electrical shunt for an outwardly-directed proton pump that is linked to amino acid decarboxylation, as part of the extreme acid resistance (XAR) response. The sequence is that of H(+)/Cl(-) exchange transporter ClcA from Escherichia fergusonii (strain ATCC 35469 / DSM 13698 / CCUG 18766 / IAM 14443 / JCM 21226 / LMG 7866 / NBRC 102419 / NCTC 12128 / CDC 0568-73).